The following is a 248-amino-acid chain: Tyrosine recombinase XerD-like (248 aa).

A Core-binding (CB) domain is found at 1-72 (MKSYIEPFIA…TANQFLYYLY (72 aa)). Residues 85–248 (DTMKVMRTEK…PVTLEKYYKS (164 aa)) enclose the Tyr recombinase domain. Residues Lys-149 and Arg-213 contribute to the active site. Tyr-245 (O-(3'-phospho-DNA)-tyrosine intermediate) is an active-site residue.

The protein belongs to the 'phage' integrase family. XerD-like subfamily.

The protein resides in the cytoplasm. Its function is as follows. Putative tyrosine recombinase. Not involved in the cutting and rejoining of the recombining DNA molecules on dif(SL) site. The chain is Tyrosine recombinase XerD-like from Streptococcus pyogenes serotype M18 (strain MGAS8232).